The sequence spans 488 residues: Inosine-5'-monophosphate dehydrogenase (488 aa).

2 CBS domains span residues 95–153 and 157–216; these read VISN…SIKI and MTQE…AKDE. Residues aspartate 250 and 300–302 each bind NAD(+); that span reads GIG. K(+)-binding residues include glycine 302 and glycine 304. Serine 305 contributes to the IMP binding site. Cysteine 307 contributes to the K(+) binding site. The Thioimidate intermediate role is filled by cysteine 307. IMP is bound by residues 340–342, 363–364, and 387–391; these read DGG, GS, and YRGMG. Arginine 403 functions as the Proton acceptor in the catalytic mechanism. Residue glutamate 417 coordinates IMP. Residues 468–488 are disordered; it reads GLAESHPHNIQITKESPNYSF. K(+) is bound by residues glutamate 471, serine 472, and histidine 473. A compositionally biased stretch (polar residues) spans 475 to 488; the sequence is HNIQITKESPNYSF.

This sequence belongs to the IMPDH/GMPR family. As to quaternary structure, homotetramer. Requires K(+) as cofactor.

The enzyme catalyses IMP + NAD(+) + H2O = XMP + NADH + H(+). It functions in the pathway purine metabolism; XMP biosynthesis via de novo pathway; XMP from IMP: step 1/1. Its activity is regulated as follows. Mycophenolic acid (MPA) is a non-competitive inhibitor that prevents formation of the closed enzyme conformation by binding to the same site as the amobile flap. In contrast, mizoribine monophosphate (MZP) is a competitive inhibitor that induces the closed conformation. MPA is a potent inhibitor of mammalian IMPDHs but a poor inhibitor of the bacterial enzymes. MZP is a more potent inhibitor of bacterial IMPDH. Functionally, catalyzes the conversion of inosine 5'-phosphate (IMP) to xanthosine 5'-phosphate (XMP), the first committed and rate-limiting step in the de novo synthesis of guanine nucleotides, and therefore plays an important role in the regulation of cell growth. The sequence is that of Inosine-5'-monophosphate dehydrogenase from Staphylococcus aureus (strain Mu50 / ATCC 700699).